A 239-amino-acid polypeptide reads, in one-letter code: Suppressor of organelle fusion 1 (239 aa).

Belongs to the WD repeat WDR91 family. Interacts with sorf-2; the interaction is direct. Interacts with bec-1.

Its subcellular location is the early endosome. It localises to the late endosome. The protein resides in the cytoplasm. Functionally, together with sorf-2 negatively regulates the levels of phosphatidylinositol 3-phosphate (PtdIns3P) to enable the conversion of early endosomes to late endosomes. Binds to sorf-2 and the sorf-1-sorf-2 complex likely acts through bec-1, a non-catalytic subunit of phosphatidylinositol 3-kinase (PI3K), to suppress PI3K activity, thereby negatively regulating endosomal PtdIns3P levels. The sequence is that of Suppressor of organelle fusion 1 from Caenorhabditis elegans.